We begin with the raw amino-acid sequence, 76 residues long: Kappa-actitoxin-Avd4d (76 aa).

Residues 1–19 (MNKALFLCLVVLCAAVVFA) form the signal peptide. Positions 20 to 31 (AEDLQKAKHVPF) are excised as a propeptide. Intrachain disulfides connect C37–C72, C39–C65, and C55–C73.

Belongs to the sea anemone type 3 (BDS) potassium channel toxin family. Moderately expressed in the ectodermal tissue from the distal and proximal tentacles, body wall, and oral disk.

It localises to the secreted. It is found in the nematocyst. In terms of biological role, blocks Kv3 voltage-gated potassium channels. Reduces blood pressure. In Anemonia viridis (Snakelocks anemone), this protein is Kappa-actitoxin-Avd4d.